Consider the following 96-residue polypeptide: Putative regulatory protein DET0036 (96 aa).

The protein belongs to the RemA family.

The polypeptide is Putative regulatory protein DET0036 (Dehalococcoides mccartyi (strain ATCC BAA-2266 / KCTC 15142 / 195) (Dehalococcoides ethenogenes (strain 195))).